A 926-amino-acid polypeptide reads, in one-letter code: Isoleucine--tRNA ligase (926 aa).

The disordered stretch occupies residues 1–21 (MKMKETLQLGKTAFPMRGNLP). Residues 57–67 (PYANGNIHLGH) carry the 'HIGH' region motif. Position 552 (Glu-552) interacts with L-isoleucyl-5'-AMP. The short motif at 593–597 (KMSKS) is the 'KMSKS' region element. ATP is bound at residue Lys-596. Zn(2+) is bound by residues Cys-886, Cys-889, Cys-906, and Cys-909.

The protein belongs to the class-I aminoacyl-tRNA synthetase family. IleS type 1 subfamily. In terms of assembly, monomer. The cofactor is Zn(2+).

The protein localises to the cytoplasm. The catalysed reaction is tRNA(Ile) + L-isoleucine + ATP = L-isoleucyl-tRNA(Ile) + AMP + diphosphate. Functionally, catalyzes the attachment of isoleucine to tRNA(Ile). As IleRS can inadvertently accommodate and process structurally similar amino acids such as valine, to avoid such errors it has two additional distinct tRNA(Ile)-dependent editing activities. One activity is designated as 'pretransfer' editing and involves the hydrolysis of activated Val-AMP. The other activity is designated 'posttransfer' editing and involves deacylation of mischarged Val-tRNA(Ile). This Enterococcus faecalis (strain ATCC 700802 / V583) protein is Isoleucine--tRNA ligase.